Reading from the N-terminus, the 378-residue chain is Schlafen family member 2 (378 aa).

It belongs to the Schlafen family. In terms of tissue distribution, mainly expressed in the thymus, lymph node and spleen.

It is found in the cytoplasm. In terms of biological role, tRNA-binding protein involved in T-cell mediated immunity. Plays a key role during the metabolic reprograming phase of activated T-cell, when T-cells produce reactive oxygen species (ROS): acts by binding tRNAs and protecting them from cleavage by the oxidative stress-activated ribonuclease angiogenin (ANG). Also required for T-cell quiescence maintenance. The chain is Schlafen family member 2 from Mus musculus (Mouse).